Here is a 422-residue protein sequence, read N- to C-terminus: Cytokine receptor-like factor 1 (422 aa).

A signal peptide spans 1–37 (MPAGRRGPAAQSARRPPPLLPLLLLLCVLGAPRAGSG). In terms of domain architecture, Ig-like C2-type spans 38 to 131 (AHTAVISPQD…SILAGSCLYV (94 aa)). N-linked (GlcNAc...) asparagine glycans are attached at residues Asn92, Asn104, and Asn140. Fibronectin type-III domains lie at 137-232 (KPVN…ILDV) and 237-341 (PPPD…TPRS). Cysteines 143 and 153 form a disulfide. Residue Asn168 is glycosylated (N-linked (GlcNAc...) asparagine). Cys184 and Cys195 are oxidised to a cystine. Ser219 carries the post-translational modification Phosphoserine. Asn292 carries an N-linked (GlcNAc...) asparagine glycan. The short motif at 327–331 (WSEWS) is the WSXWS motif element. The disordered stretch occupies residues 332 to 363 (HPTAASTPRSERPGPGGGACEPRGGEPSSGPV). An N-linked (GlcNAc...) asparagine glycan is attached at Asn382. The interval 399-422 (HKTRNQDEGILPSGRRGTARGPAR) is disordered.

This sequence belongs to the type I cytokine receptor family. Type 3 subfamily. Forms covalent di- and tetramers. Forms a heteromeric complex with cardiotrophin-like cytokine CLCF1/CLC; the CRLF1-CLCF1 complex is a ligand for the ciliary neurotrophic factor receptor/CNTFR. The CRLF1-CLCF1 heterodimer binds SORL1 (via N-terminal ectodomain); within this complex, the interaction is mediated predominantly by the CRLF1 moiety. The tripartite signaling complex formed by CRLF1, CLCF1 and CNTFR also binds SORL1. As to expression, highest levels of expression observed in spleen, thymus, lymph node, appendix, bone marrow, stomach, placenta, heart, thyroid and ovary. Strongly expressed also in fetal lung.

The protein resides in the secreted. Functionally, in complex with CLCF1, forms a heterodimeric neurotropic cytokine that plays a crucial role during neuronal development. May also play a regulatory role in the immune system. The chain is Cytokine receptor-like factor 1 (CRLF1) from Homo sapiens (Human).